Reading from the N-terminus, the 345-residue chain is Probable deoxyhypusine synthase 2 (345 aa).

The active-site Nucleophile is the Lys-292.

Belongs to the deoxyhypusine synthase family. The cofactor is NAD(+).

The enzyme catalyses [eIF5A protein]-L-lysine + spermidine = [eIF5A protein]-deoxyhypusine + propane-1,3-diamine. Its pathway is protein modification; eIF5A hypusination. Its function is as follows. Catalyzes the NAD-dependent oxidative cleavage of spermidine and the subsequent transfer of the butylamine moiety of spermidine to the epsilon-amino group of a specific lysine residue of the eIF-5A precursor protein to form the intermediate deoxyhypusine residue. The protein is Probable deoxyhypusine synthase 2 (dys2) of Methanosarcina acetivorans (strain ATCC 35395 / DSM 2834 / JCM 12185 / C2A).